Here is a 648-residue protein sequence, read N- to C-terminus: Phosphatidylinositol-3,5-bisphosphate 3-phosphatase MTMR14 (648 aa).

Residues 1–19 are compositionally biased toward low complexity; the sequence is MAGARAAAAASAGSTASSG. The segment at 1 to 27 is disordered; the sequence is MAGARAAAAASAGSTASSGSPPPQEPG. Position 193 is an N6-acetyllysine (lysine 193). Residues asparagine 225 and asparagine 240 are each glycosylated (N-linked (GlcNAc...) asparagine). Cysteine 329 acts as the Phosphocysteine intermediate in catalysis. The a 1,2-diacyl-sn-glycero-3-phospho-(1D-myo-inositol-3,5-bisphosphate) site is built by glycine 332, tryptophan 333, aspartate 334, arginine 335, and arginine 381. A 1,2-diacyl-sn-glycero-3-phospho-(1D-myo-inositol-3-phosphate)-binding residues include glycine 332, tryptophan 333, aspartate 334, arginine 335, and arginine 381. A disordered region spans residues 471-544; it reads PTQAAWRKSH…PRSVDHPLPG (74 aa). A compositionally biased stretch (basic and acidic residues) spans 494–506; sequence PSEERLPSHHGLT. Position 516 is a phosphoserine (serine 516). Asparagine 517 is a glycosylation site (N-linked (GlcNAc...) asparagine). Residues serine 528, serine 578, and serine 622 each carry the phosphoserine modification. Arginine 636 is subject to Omega-N-methylarginine.

It belongs to the protein-tyrosine phosphatase family. Non-receptor class myotubularin subfamily.

It localises to the cytoplasm. It carries out the reaction a 1,2-diacyl-sn-glycero-3-phospho-(1D-myo-inositol-3,5-bisphosphate) + H2O = a 1,2-diacyl-sn-glycero-3-phospho-(1D-myo-inositol-5-phosphate) + phosphate. The enzyme catalyses a 1,2-diacyl-sn-glycero-3-phospho-(1D-myo-inositol-3-phosphate) + H2O = a 1,2-diacyl-sn-glycero-3-phospho-(1D-myo-inositol) + phosphate. Functionally, lipid phosphatase that specifically dephosphorylates the D-3 position of phosphatidylinositol 3-phosphate and phosphatidylinositol 3,5-bisphosphate, generating phosphatidylinositol and phosphatidylinositol 5-phosphate. The polypeptide is Phosphatidylinositol-3,5-bisphosphate 3-phosphatase MTMR14 (Mus musculus (Mouse)).